We begin with the raw amino-acid sequence, 366 residues long: UDP-N-acetylglucosamine--N-acetylmuramyl-(pentapeptide) pyrophosphoryl-undecaprenol N-acetylglucosamine transferase (366 aa).

UDP-N-acetyl-alpha-D-glucosamine contacts are provided by residues 14-16 (TGG), N125, R168, S196, and Q297.

Belongs to the glycosyltransferase 28 family. MurG subfamily.

It is found in the cell inner membrane. The catalysed reaction is di-trans,octa-cis-undecaprenyl diphospho-N-acetyl-alpha-D-muramoyl-L-alanyl-D-glutamyl-meso-2,6-diaminopimeloyl-D-alanyl-D-alanine + UDP-N-acetyl-alpha-D-glucosamine = di-trans,octa-cis-undecaprenyl diphospho-[N-acetyl-alpha-D-glucosaminyl-(1-&gt;4)]-N-acetyl-alpha-D-muramoyl-L-alanyl-D-glutamyl-meso-2,6-diaminopimeloyl-D-alanyl-D-alanine + UDP + H(+). Its pathway is cell wall biogenesis; peptidoglycan biosynthesis. Cell wall formation. Catalyzes the transfer of a GlcNAc subunit on undecaprenyl-pyrophosphoryl-MurNAc-pentapeptide (lipid intermediate I) to form undecaprenyl-pyrophosphoryl-MurNAc-(pentapeptide)GlcNAc (lipid intermediate II). The sequence is that of UDP-N-acetylglucosamine--N-acetylmuramyl-(pentapeptide) pyrophosphoryl-undecaprenol N-acetylglucosamine transferase from Rhodopseudomonas palustris (strain BisB5).